Consider the following 400-residue polypeptide: Formate-dependent phosphoribosylglycinamide formyltransferase (400 aa).

N(1)-(5-phospho-beta-D-ribosyl)glycinamide-binding positions include 22 to 23 (EL) and glutamate 82. ATP is bound by residues arginine 115, lysine 156, 161 to 166 (SSGKGQ), 196 to 199 (EGFI), and glutamate 204. Positions 120–309 (RLAAETLGLP…EFALHARAIL (190 aa)) constitute an ATP-grasp domain. Mg(2+) is bound by residues glutamate 268 and glutamate 280. N(1)-(5-phospho-beta-D-ribosyl)glycinamide contacts are provided by residues aspartate 287, lysine 361, and 368–369 (RR).

Belongs to the PurK/PurT family. In terms of assembly, homodimer.

It catalyses the reaction N(1)-(5-phospho-beta-D-ribosyl)glycinamide + formate + ATP = N(2)-formyl-N(1)-(5-phospho-beta-D-ribosyl)glycinamide + ADP + phosphate + H(+). It functions in the pathway purine metabolism; IMP biosynthesis via de novo pathway; N(2)-formyl-N(1)-(5-phospho-D-ribosyl)glycinamide from N(1)-(5-phospho-D-ribosyl)glycinamide (formate route): step 1/1. In terms of biological role, involved in the de novo purine biosynthesis. Catalyzes the transfer of formate to 5-phospho-ribosyl-glycinamide (GAR), producing 5-phospho-ribosyl-N-formylglycinamide (FGAR). Formate is provided by PurU via hydrolysis of 10-formyl-tetrahydrofolate. This is Formate-dependent phosphoribosylglycinamide formyltransferase from Xanthomonas oryzae pv. oryzae (strain PXO99A).